The primary structure comprises 352 residues: Histidinol-phosphate aminotransferase (352 aa).

Position 221 is an N6-(pyridoxal phosphate)lysine (Lys-221).

Belongs to the class-II pyridoxal-phosphate-dependent aminotransferase family. Histidinol-phosphate aminotransferase subfamily. Homodimer. The cofactor is pyridoxal 5'-phosphate.

It carries out the reaction L-histidinol phosphate + 2-oxoglutarate = 3-(imidazol-4-yl)-2-oxopropyl phosphate + L-glutamate. The protein operates within amino-acid biosynthesis; L-histidine biosynthesis; L-histidine from 5-phospho-alpha-D-ribose 1-diphosphate: step 7/9. This is Histidinol-phosphate aminotransferase from Staphylococcus aureus (strain MSSA476).